The chain runs to 175 residues: 3-hydroxyanthranilate 3,4-dioxygenase (175 aa).

Residue arginine 45 participates in O2 binding. Fe cation contacts are provided by histidine 49, glutamate 55, and histidine 93. Residue glutamate 55 coordinates substrate. Substrate contacts are provided by arginine 97 and glutamate 107. 4 residues coordinate a divalent metal cation: cysteine 122, cysteine 125, cysteine 159, and cysteine 162.

The protein belongs to the 3-HAO family. Requires Fe(2+) as cofactor.

Its subcellular location is the cytoplasm. It catalyses the reaction 3-hydroxyanthranilate + O2 = (2Z,4Z)-2-amino-3-carboxymuconate 6-semialdehyde. It participates in cofactor biosynthesis; NAD(+) biosynthesis; quinolinate from L-kynurenine: step 3/3. Its function is as follows. Catalyzes the oxidative ring opening of 3-hydroxyanthranilate to 2-amino-3-carboxymuconate semialdehyde, which spontaneously cyclizes to quinolinate. The chain is 3-hydroxyanthranilate 3,4-dioxygenase from Lodderomyces elongisporus (strain ATCC 11503 / CBS 2605 / JCM 1781 / NBRC 1676 / NRRL YB-4239) (Yeast).